We begin with the raw amino-acid sequence, 260 residues long: Ribosomal RNA small subunit methyltransferase J (260 aa).

Residues 125–126 (ER) and Asp179 contribute to the S-adenosyl-L-methionine site. The tract at residues 234 to 260 (IDGPKPSHALDGKSSRYDIYPKKALKP) is disordered. Positions 241–254 (HALDGKSSRYDIYP) are enriched in basic and acidic residues.

It belongs to the methyltransferase superfamily. RsmJ family.

It is found in the cytoplasm. It carries out the reaction guanosine(1516) in 16S rRNA + S-adenosyl-L-methionine = N(2)-methylguanosine(1516) in 16S rRNA + S-adenosyl-L-homocysteine + H(+). Its function is as follows. Specifically methylates the guanosine in position 1516 of 16S rRNA. This is Ribosomal RNA small subunit methyltransferase J from Pseudomonas fluorescens (strain SBW25).